The chain runs to 158 residues: Phosphopantetheine adenylyltransferase (158 aa).

This sequence belongs to the eukaryotic CoaD family.

The protein resides in the cytoplasm. It catalyses the reaction (R)-4'-phosphopantetheine + ATP + H(+) = 3'-dephospho-CoA + diphosphate. The protein operates within cofactor biosynthesis; coenzyme A biosynthesis. Reversibly transfers an adenylyl group from ATP to 4'-phosphopantetheine, yielding dephospho-CoA (dPCoA) and pyrophosphate. This chain is Phosphopantetheine adenylyltransferase, found in Pyrococcus horikoshii (strain ATCC 700860 / DSM 12428 / JCM 9974 / NBRC 100139 / OT-3).